The following is a 382-amino-acid chain: uncharacterized protein (382 aa).

The next 12 membrane-spanning stretches (helical) occupy residues 14–34 (GLLLLTLAIAVLNTLVPLWLA), 45–65 (VVSSSYFTGNLVGTLLTGYVI), 79–99 (FIFAAGCAGLGLMIGFWSWLA), 102–122 (FVAGIGCAMIWVVVESALMCS), 131–151 (LLAAYMMVYYVGTFLGQLLVS), 157–177 (LMSVLPWVTGLTLAGILPLLF), 204–224 (LGVNGCIISGIVLGSLYGLMP), 235–255 (ASIGFWMAVLVSAGILGQWPI), 270–290 (VQVFVVILGSIAMLSQAAMAP), 291–311 (ALFILGAAGFTLYPVAMAWAC), 325–345 (ALLLSYTVGSLLGPSFTAMLM), and 348–368 (FSDNLLFIMIASVSFIYLLML).

It belongs to the major facilitator superfamily. YcaD (TC 2.A.1.26) family.

It is found in the cell inner membrane. This is an uncharacterized protein from Escherichia coli O6:K15:H31 (strain 536 / UPEC).